The primary structure comprises 251 residues: Large ribosomal subunit protein uL2 (251 aa).

The span at 1–12 (MGKRLRVQRHGR) shows a compositional bias: basic residues. Residues 1–22 (MGKRLRVQRHGRGTPQWRNRGH) are disordered.

The protein belongs to the universal ribosomal protein uL2 family. In terms of assembly, part of the 50S ribosomal subunit. Forms a bridge to the 30S subunit in the 70S ribosome.

Functionally, one of the primary rRNA binding proteins. Required for association of the 30S and 50S subunits to form the 70S ribosome, for tRNA binding and peptide bond formation. It has been suggested to have peptidyltransferase activity; this is somewhat controversial. Makes several contacts with the 16S rRNA in the 70S ribosome. The polypeptide is Large ribosomal subunit protein uL2 (Ignicoccus hospitalis (strain KIN4/I / DSM 18386 / JCM 14125)).